Consider the following 372-residue polypeptide: NAD(P)H-quinone oxidoreductase subunit 1 (372 aa).

A run of 8 helical transmembrane segments spans residues 29–49 (WIPL…LVVV), 97–117 (WLFT…YLIV), 130–150 (VGIF…LMSG), 176–196 (LAFS…IDIV), 204–224 (ILGW…IAAL), 254–274 (FGLF…VFAI), 308–328 (SLGI…AVLL), and 347–367 (FLLP…LAFP).

It belongs to the complex I subunit 1 family. In terms of assembly, NDH-1 is composed of at least 11 different subunits.

It is found in the cellular thylakoid membrane. It carries out the reaction a plastoquinone + NADH + (n+1) H(+)(in) = a plastoquinol + NAD(+) + n H(+)(out). The enzyme catalyses a plastoquinone + NADPH + (n+1) H(+)(in) = a plastoquinol + NADP(+) + n H(+)(out). In terms of biological role, NDH-1 shuttles electrons from an unknown electron donor, via FMN and iron-sulfur (Fe-S) centers, to quinones in the respiratory and/or the photosynthetic chain. The immediate electron acceptor for the enzyme in this species is believed to be plastoquinone. Couples the redox reaction to proton translocation, and thus conserves the redox energy in a proton gradient. The sequence is that of NAD(P)H-quinone oxidoreductase subunit 1 from Rippkaea orientalis (strain PCC 8801 / RF-1) (Cyanothece sp. (strain PCC 8801)).